The sequence spans 291 residues: Bifunctional protein FolD (291 aa).

NADP(+) is bound by residues 173-175 (GRS) and serine 198.

Belongs to the tetrahydrofolate dehydrogenase/cyclohydrolase family. Homodimer.

It carries out the reaction (6R)-5,10-methylene-5,6,7,8-tetrahydrofolate + NADP(+) = (6R)-5,10-methenyltetrahydrofolate + NADPH. The enzyme catalyses (6R)-5,10-methenyltetrahydrofolate + H2O = (6R)-10-formyltetrahydrofolate + H(+). Its pathway is one-carbon metabolism; tetrahydrofolate interconversion. Functionally, catalyzes the oxidation of 5,10-methylenetetrahydrofolate to 5,10-methenyltetrahydrofolate and then the hydrolysis of 5,10-methenyltetrahydrofolate to 10-formyltetrahydrofolate. The polypeptide is Bifunctional protein FolD (Psychrobacter sp. (strain PRwf-1)).